A 188-amino-acid polypeptide reads, in one-letter code: Cytochrome c oxidase assembly protein CtaG (188 aa).

Over 1-8 the chain is Cytoplasmic; sequence MSKKSNKN. The chain crosses the membrane as a helical; Signal-anchor for type II membrane protein span at residues 9–31; the sequence is LAFSLLGLIISMVLLSFASVPIY. Topologically, residues 32-188 are periplasmic; that stretch reads NLFCKVTGYG…SSLRGNYVSN (157 aa).

Belongs to the COX11/CtaG family.

The protein localises to the cell inner membrane. Its function is as follows. Exerts its effect at some terminal stage of cytochrome c oxidase synthesis, probably by being involved in the insertion of the copper B into subunit I. The sequence is that of Cytochrome c oxidase assembly protein CtaG from Rickettsia conorii (strain ATCC VR-613 / Malish 7).